Reading from the N-terminus, the 381-residue chain is E3 ubiquitin-protein ligase RNF13 (381 aa).

An N-terminal signal peptide occupies residues 1 to 34 (MLLSIGMLMLSATQVYTILTVQLFAFLNLLPVEA). Residues 35-182 (DILAYNFENA…VPEFSLPLEY (148 aa)) lie on the Lumenal side of the membrane. Residues 65 to 160 (KGFLINSKPE…GESSANSLKD (96 aa)) form the PA domain. Asn-88 is a glycosylation site (N-linked (GlcNAc...) asparagine). A helical membrane pass occupies residues 183–203 (YLIPFLIIVGICLILIVIFMI). The Cytoplasmic portion of the chain corresponds to 204 to 381 (TKFVQDRHRA…ERDYNIANTV (178 aa)). The RING-type; atypical zinc-finger motif lies at 240–282 (CAICLDEYEDGDKLRILPCSHAYHCKCVDPWLTKTKKTCPVCK). The interval 285–381 (VVPSQGDSDS…ERDYNIANTV (97 aa)) is disordered. Acidic residues-rich tracts occupy residues 292–304 (SDSD…EENE) and 339–357 (SDYE…AENE).

As to quaternary structure, interacts with ERN1. Post-translationally, autoubiquitinated. Widely expressed (at protein level). In normal pancreas, expressed in islets, but not in ducts, nor in acini (at protein level).

Its subcellular location is the endoplasmic reticulum membrane. The protein localises to the late endosome membrane. It is found in the lysosome membrane. The protein resides in the nucleus inner membrane. The enzyme catalyses S-ubiquitinyl-[E2 ubiquitin-conjugating enzyme]-L-cysteine + [acceptor protein]-L-lysine = [E2 ubiquitin-conjugating enzyme]-L-cysteine + N(6)-ubiquitinyl-[acceptor protein]-L-lysine.. Its pathway is protein modification; protein ubiquitination. In terms of biological role, E3 ubiquitin-protein ligase that regulates cell proliferation. Involved in apoptosis regulation. Mediates ER stress-induced activation of JNK signaling pathway and apoptosis by promoting ERN1 activation and splicing of XBP1 mRNA. Also involved in protein trafficking and localization. This is E3 ubiquitin-protein ligase RNF13 from Homo sapiens (Human).